The chain runs to 462 residues: Exodeoxyribonuclease 7 large subunit (462 aa).

This sequence belongs to the XseA family. As to quaternary structure, heterooligomer composed of large and small subunits.

It is found in the cytoplasm. The enzyme catalyses Exonucleolytic cleavage in either 5'- to 3'- or 3'- to 5'-direction to yield nucleoside 5'-phosphates.. In terms of biological role, bidirectionally degrades single-stranded DNA into large acid-insoluble oligonucleotides, which are then degraded further into small acid-soluble oligonucleotides. This is Exodeoxyribonuclease 7 large subunit from Proteus mirabilis (strain HI4320).